A 784-amino-acid polypeptide reads, in one-letter code: Ent-kaurene synthase 1, chloroplastic (784 aa).

A chloroplast-targeting transit peptide spans 1-28; that stretch reads MNLSLCIASPLLTKSSRPTALSAIHTAS. The Mg(2+) site is built by Asp-528, Asp-532, Asn-672, and Glu-680. Residues 528 to 532 carry the DDXXD motif motif; sequence DDFFD.

It belongs to the terpene synthase family. Requires Mg(2+) as cofactor. Accumulates in leaves.

It localises to the plastid. The protein resides in the chloroplast. The catalysed reaction is ent-copalyl diphosphate = ent-kaur-16-ene + diphosphate. The protein operates within secondary metabolite biosynthesis; terpenoid biosynthesis. It participates in plant hormone biosynthesis; gibberellin biosynthesis. Functionally, involved in the biosynthesis of ent-kaurene diterpenoids natural products such as oridonin, miltiradiene, eriocalyxin B and nezukol, known to exhibit antitumor, anti-inflammatory and antibacterial activities, and in the production of gibberellins phytohormones. Catalyzes the conversion of ent-copalyl diphosphate (ent-CPP) to ent-kaurene. This chain is Ent-kaurene synthase 1, chloroplastic, found in Stevia rebaudiana (Stevia).